Here is a 427-residue protein sequence, read N- to C-terminus: Septin-8-B (427 aa).

One can recognise a Septin-type G domain in the interval 39–305 (QGFCFNILCV…ELYRRCKLEE (267 aa)). The G1 motif stretch occupies residues 49–56 (GETGIGKS). Residues 49 to 56 (GETGIGKS), Gly-104, 185 to 193 (KADTISKSE), Gly-239, and Arg-254 contribute to the GTP site. The G3 motif stretch occupies residues 101–104 (DTVG). The tract at residues 184–187 (AKAD) is G4 motif. A coiled-coil region spans residues 320 to 407 (LQETYEAKRK…RRKVAMETLQ (88 aa)). Residues 406-418 (LQSQSFQATSQQP) are compositionally biased toward polar residues. The disordered stretch occupies residues 406–427 (LQSQSFQATSQQPLKKDKDRKN).

This sequence belongs to the TRAFAC class TrmE-Era-EngA-EngB-Septin-like GTPase superfamily. Septin GTPase family.

In Xenopus laevis (African clawed frog), this protein is Septin-8-B (sept8-b).